The chain runs to 331 residues: Ferredoxin--NADP reductase 2 (331 aa).

FAD contacts are provided by glutamate 37, glutamine 45, tyrosine 50, valine 90, phenylalanine 124, aspartate 286, and threonine 327.

Belongs to the ferredoxin--NADP reductase type 2 family. In terms of assembly, homodimer. Requires FAD as cofactor.

It carries out the reaction 2 reduced [2Fe-2S]-[ferredoxin] + NADP(+) + H(+) = 2 oxidized [2Fe-2S]-[ferredoxin] + NADPH. The protein is Ferredoxin--NADP reductase 2 of Listeria monocytogenes serotype 4b (strain F2365).